Reading from the N-terminus, the 232-residue chain is Large ribosomal subunit protein uL1 (232 aa).

The protein belongs to the universal ribosomal protein uL1 family. In terms of assembly, part of the 50S ribosomal subunit.

Its function is as follows. Binds directly to 23S rRNA. The L1 stalk is quite mobile in the ribosome, and is involved in E site tRNA release. Functionally, protein L1 is also a translational repressor protein, it controls the translation of the L11 operon by binding to its mRNA. The sequence is that of Large ribosomal subunit protein uL1 from Sinorhizobium fredii (strain NBRC 101917 / NGR234).